A 217-amino-acid chain; its full sequence is E3 ubiquitin-protein ligase znrf2 (217 aa).

Disordered regions lie at residues 1–27 (MGAK…SATA) and 63–111 (QFIS…ERST). Residue G2 is the site of N-myristoyl glycine attachment. Residues 68 to 100 (RTRSVGPSARPQSGINIPNSGAYSSADSGNSTP) show a composition bias toward polar residues. The RING-type; atypical zinc finger occupies 174 to 215 (CAICLEELLQGDTIARLPCLCIYHKGCIDEWFEVNRSCPEHP).

It is found in the endosome membrane. Its subcellular location is the lysosome membrane. The protein resides in the presynaptic cell membrane. The catalysed reaction is S-ubiquitinyl-[E2 ubiquitin-conjugating enzyme]-L-cysteine + [acceptor protein]-L-lysine = [E2 ubiquitin-conjugating enzyme]-L-cysteine + N(6)-ubiquitinyl-[acceptor protein]-L-lysine.. It participates in protein modification; protein ubiquitination. Functionally, may play a role in the establishment and maintenance of neuronal transmission and plasticity via its ubiquitin ligase activity. E3 ubiquitin ligases accept ubiquitin from an E2 ubiquitin-conjugating enzyme in the form of a thioester and then directly transfer the ubiquitin to targeted substrates. The chain is E3 ubiquitin-protein ligase znrf2 (znrf2) from Danio rerio (Zebrafish).